Consider the following 89-residue polypeptide: Small ribosomal subunit protein uS15 (89 aa).

The protein belongs to the universal ribosomal protein uS15 family. As to quaternary structure, part of the 30S ribosomal subunit. Forms a bridge to the 50S subunit in the 70S ribosome, contacting the 23S rRNA.

In terms of biological role, one of the primary rRNA binding proteins, it binds directly to 16S rRNA where it helps nucleate assembly of the platform of the 30S subunit by binding and bridging several RNA helices of the 16S rRNA. Forms an intersubunit bridge (bridge B4) with the 23S rRNA of the 50S subunit in the ribosome. This is Small ribosomal subunit protein uS15 from Pseudomonas putida (Arthrobacter siderocapsulatus).